The chain runs to 473 residues: MRAPVAVVILAAGKGTRMRSAQPKVLQPLAGRPLLAHVLDTALALGPEQVHVVYGHGGDQVAAAHADYPVYWVEQPRQLGTGHAVACALPQIPDDHRVLVLYGDVPLVTPETLKPLLAGDGLELLAARVPDPTGYGRIIRDDDGAVVAIVEEKDADPEQRRVDEVNTGLLAASAGDLRRWMAALSADNAQGEYYLTDAVAAARADGTPVRARFTSEAGEASGINDLVQLAEVEEAFQRRWARRLLQGGLRLVAPHRFTLRGAVRHGTDCAVDADCTLEGEVQLGHGVQVGQGVILRDCVIEDGAQVGPYTVVEQAHIGAGCRVGPFAHLRPGTVLEEGARVGNFVETKAARLGPGAKANHLTYVGDAEVGARANLGAGTITCNYDGAEKHRTQIGEDAFIGSGSQLVAPVQVGARATIGAGTTLTSDAPADALTVGRSRARTIPGWQHPGLTGRRGPPDDNDATPASGGAKEE.

A pyrophosphorylase region spans residues 1–226 (MRAPVAVVIL…AGEASGINDL (226 aa)). UDP-N-acetyl-alpha-D-glucosamine-binding positions include 10 to 13 (LAAG), lysine 24, glutamine 75, 80 to 81 (GT), 102 to 104 (YGD), glycine 136, glutamate 151, asparagine 166, and asparagine 224. A Mg(2+)-binding site is contributed by aspartate 104. Residue asparagine 224 participates in Mg(2+) binding. Residues 227 to 247 (VQLAEVEEAFQRRWARRLLQG) form a linker region. Positions 248 to 473 (GLRLVAPHRF…TPASGGAKEE (226 aa)) are N-acetyltransferase. Positions 330 and 348 each coordinate UDP-N-acetyl-alpha-D-glucosamine. Histidine 360 acts as the Proton acceptor in catalysis. Residues tyrosine 363 and asparagine 374 each coordinate UDP-N-acetyl-alpha-D-glucosamine. Acetyl-CoA contacts are provided by residues alanine 377, 383–384 (NY), serine 402, alanine 420, and arginine 437. The segment at 439-473 (RARTIPGWQHPGLTGRRGPPDDNDATPASGGAKEE) is disordered.

The protein in the N-terminal section; belongs to the N-acetylglucosamine-1-phosphate uridyltransferase family. In the C-terminal section; belongs to the transferase hexapeptide repeat family. As to quaternary structure, homotrimer. Mg(2+) serves as cofactor.

It is found in the cytoplasm. The catalysed reaction is alpha-D-glucosamine 1-phosphate + acetyl-CoA = N-acetyl-alpha-D-glucosamine 1-phosphate + CoA + H(+). The enzyme catalyses N-acetyl-alpha-D-glucosamine 1-phosphate + UTP + H(+) = UDP-N-acetyl-alpha-D-glucosamine + diphosphate. Its pathway is nucleotide-sugar biosynthesis; UDP-N-acetyl-alpha-D-glucosamine biosynthesis; N-acetyl-alpha-D-glucosamine 1-phosphate from alpha-D-glucosamine 6-phosphate (route II): step 2/2. It participates in nucleotide-sugar biosynthesis; UDP-N-acetyl-alpha-D-glucosamine biosynthesis; UDP-N-acetyl-alpha-D-glucosamine from N-acetyl-alpha-D-glucosamine 1-phosphate: step 1/1. The protein operates within bacterial outer membrane biogenesis; LPS lipid A biosynthesis. Catalyzes the last two sequential reactions in the de novo biosynthetic pathway for UDP-N-acetylglucosamine (UDP-GlcNAc). The C-terminal domain catalyzes the transfer of acetyl group from acetyl coenzyme A to glucosamine-1-phosphate (GlcN-1-P) to produce N-acetylglucosamine-1-phosphate (GlcNAc-1-P), which is converted into UDP-GlcNAc by the transfer of uridine 5-monophosphate (from uridine 5-triphosphate), a reaction catalyzed by the N-terminal domain. The sequence is that of Bifunctional protein GlmU from Halorhodospira halophila (strain DSM 244 / SL1) (Ectothiorhodospira halophila (strain DSM 244 / SL1)).